The primary structure comprises 271 residues: WUSCHEL-related homeobox 6 (271 aa).

The homeobox; WUS-type DNA-binding region spans 57–121; sequence AATLRWNPTP…NHKARERLKR (65 aa). The interval 118–195 is disordered; that stretch reads RLKRRRREGG…TEESDQRASE (78 aa). Composition is skewed to basic and acidic residues over residues 132-148 and 180-195; these read PHKD…RVDQ and NEDH…RASE.

Belongs to the WUS homeobox family. As to expression, highly expressed in developing ovules. Present in developing primordia and differentiating organs but absent in mature organs.

The protein resides in the nucleus. In terms of biological role, transcription factor that plays a central role in ovule patterning by regulating cell proliferation of the maternal integuments and differentiation of the maegaspore mother cell (MCC). Involved in AGAMOUS (AG) repression in leaves. This Arabidopsis thaliana (Mouse-ear cress) protein is WUSCHEL-related homeobox 6 (WOX6).